The following is a 223-amino-acid chain: MNILIFGPNGSGKGTQGALVKKKYDLAHIESGAIFREHIGGGTELGKQAKAFIERGDLVPDDITIPMVLETLKSKGANGWLLDGFPRNMVQAQKLWDALQAEGMKLDYVIEILLPREVAKNRIMGRRLCKNDNNHPNNIFIDAIKPNGDVCRVCGGELSARSDDQDEGAIGKRHDIYYNTVDGTLAAAYFYKDLAAKGMTKYIELDGEGAIDAIKDKLLAQLS.

ATP is bound at residue 10–15 (GSGKGT). Residues 30-59 (ESGAIFREHIGGGTELGKQAKAFIERGDLV) form an NMP region. AMP is bound by residues Ser-31, Arg-36, 57-59 (DLV), 84-87 (GFPR), and Gln-91. The LID stretch occupies residues 125–164 (GRRLCKNDNNHPNNIFIDAIKPNGDVCRVCGGELSARSDD). Arg-126 lines the ATP pocket. Arg-161 and Arg-173 together coordinate AMP. Gly-209 contributes to the ATP binding site.

It belongs to the adenylate kinase family. As to quaternary structure, monomer.

The protein resides in the cytoplasm. It catalyses the reaction AMP + ATP = 2 ADP. It participates in purine metabolism; AMP biosynthesis via salvage pathway; AMP from ADP: step 1/1. Functionally, catalyzes the reversible transfer of the terminal phosphate group between ATP and AMP. Plays an important role in cellular energy homeostasis and in adenine nucleotide metabolism. The protein is Adenylate kinase of Nitratidesulfovibrio vulgaris (strain ATCC 29579 / DSM 644 / CCUG 34227 / NCIMB 8303 / VKM B-1760 / Hildenborough) (Desulfovibrio vulgaris).